The sequence spans 322 residues: PI-PLC X domain-containing protein 3 (322 aa).

One can recognise a PI-PLC X-box domain in the interval 22–197 (TLHGIPLTNL…EYQVLVFYHN (176 aa)). Residues histidine 37 and histidine 114 contribute to the active site.

This chain is PI-PLC X domain-containing protein 3 (plcxd3), found in Danio rerio (Zebrafish).